Consider the following 164-residue polypeptide: Phosphopantetheine adenylyltransferase (164 aa).

Substrate is bound at residue serine 9. ATP is bound by residues 9 to 10 and histidine 17; that span reads SF. Substrate contacts are provided by lysine 41, threonine 74, and arginine 88. ATP contacts are provided by residues 89-91, glutamate 99, and 124-130; these read GVR and NSFVASS.

This sequence belongs to the bacterial CoaD family. Homohexamer. The cofactor is Mg(2+).

It localises to the cytoplasm. The catalysed reaction is (R)-4'-phosphopantetheine + ATP + H(+) = 3'-dephospho-CoA + diphosphate. Its pathway is cofactor biosynthesis; coenzyme A biosynthesis; CoA from (R)-pantothenate: step 4/5. Reversibly transfers an adenylyl group from ATP to 4'-phosphopantetheine, yielding dephospho-CoA (dPCoA) and pyrophosphate. This is Phosphopantetheine adenylyltransferase from Lactobacillus helveticus (strain DPC 4571).